A 695-amino-acid polypeptide reads, in one-letter code: MNRVINFLNMVALSAMRRSELVGAFFVIAIVFMMITPLPTGLIDVLIAVNICISCLLIMLAMHLPRPLAFSTFPAVLLLTTMFRLALSVSTTRLILLNQDAGHIVEAFGQFVVGGNLAVGLVIFLILTVVNFLVITKGSERVAEVGARFTLDAMPGKQMSIDSDLRANLITVHEARKRRAELNKESQLFGAMDGAMKFVNGDAIASLIIVAINMIGGISIGVLQHNMAAGDALQLYTVLTIGDGLIAQIPALLISVTSGMIITRVPNTEAGVEANIGREIAEQITSQPKAWIIASVAMLGFAALPGMPTGVFITIAIICGAGGLLQLQRAKPKADEQRTAAVAPEMNGKEDLRTFSPSRQFVLQFHPGQDSAQIEALVSEIRKRRNRLVVQYGLTLPSFIIEHVDDIAPDEFRFTVYDVPMLKATFTQSHVAVEARQLEGENLPAAIPGNTDRQEDQWVWLPAEQSGELNPVSSTTLIIERMERALQSCAPQFIGLQETKAILSWLESEQPELAQEMQRVLTLTRFSAVLQRLASECVPLRAIRVIAETLIEHCQHERDTNVLTDYVRIALKSQIYHQYCGAEGLQVWLVTPESEGLLRDGLRQTQTETFFALSNETSQMLVQQLHIAFPVRAPEQAVLLVAQDLRSPLRTLLREEFYHVPVLSFAEISNAAKVKVMGRFDLEDDLEPLDNEHAA.

Transmembrane regions (helical) follow at residues 21-38, 45-61, 68-92, 111-135, 203-223, 244-262, and 311-327; these read LVGAFFVIAIVFMMITPL, VLIAVNICISCLLIMLA, LAFSTFPAVLLLTTMFRLALSVSTT, FVVGGNLAVGLVIFLILTVVNFLVI, AIASLIIVAINMIGGISIGVL, GLIAQIPALLISVTSGMII, and VFITIAIICGAGGLLQL.

This sequence belongs to the FHIPEP (flagella/HR/invasion proteins export pore) family.

It localises to the cell inner membrane. In terms of biological role, involved in the secretion of harpin-pss; a proteinaceous elicitor of the hypersensitivity response in plants. The polypeptide is Hypersensitivity response secretion protein HrpI (hrpI) (Pseudomonas syringae pv. syringae).